The sequence spans 385 residues: Protein pelota homolog (385 aa).

This sequence belongs to the eukaryotic release factor 1 family. Pelota subfamily. Component of the Pelota-HBS1L complex, also named Dom34-Hbs1 complex, composed of PELO and HBS1L. Requires a divalent metal cation as cofactor.

The protein resides in the cytoplasm. In terms of biological role, component of the Pelota-HBS1L complex, a complex that recognizes stalled ribosomes and triggers the No-Go Decay (NGD) pathway. In the Pelota-HBS1L complex, PELO recognizes ribosomes stalled at the 3' end of an mRNA and engages stalled ribosomes by destabilizing mRNA in the mRNA channel. Following mRNA extraction from stalled ribosomes by the SKI complex, the Pelota-HBS1L complex promotes recruitment of ABCE1, which drives the disassembly of stalled ribosomes, followed by degradation of damaged mRNAs as part of the NGD pathway. The polypeptide is Protein pelota homolog (PELO) (Gallus gallus (Chicken)).